A 98-amino-acid chain; its full sequence is Small ribosomal subunit protein bS6 (98 aa).

The protein belongs to the bacterial ribosomal protein bS6 family.

Its function is as follows. Binds together with bS18 to 16S ribosomal RNA. The chain is Small ribosomal subunit protein bS6 from Lacticaseibacillus paracasei (strain ATCC 334 / BCRC 17002 / CCUG 31169 / CIP 107868 / KCTC 3260 / NRRL B-441) (Lactobacillus paracasei).